A 518-amino-acid polypeptide reads, in one-letter code: Bifunctional purine biosynthesis protein PurH (518 aa).

An MGS-like domain is found at 1–144 (MSKRALISVS…KNHAAVTVVC (144 aa)).

This sequence belongs to the PurH family.

It carries out the reaction (6R)-10-formyltetrahydrofolate + 5-amino-1-(5-phospho-beta-D-ribosyl)imidazole-4-carboxamide = 5-formamido-1-(5-phospho-D-ribosyl)imidazole-4-carboxamide + (6S)-5,6,7,8-tetrahydrofolate. It catalyses the reaction IMP + H2O = 5-formamido-1-(5-phospho-D-ribosyl)imidazole-4-carboxamide. The protein operates within purine metabolism; IMP biosynthesis via de novo pathway; 5-formamido-1-(5-phospho-D-ribosyl)imidazole-4-carboxamide from 5-amino-1-(5-phospho-D-ribosyl)imidazole-4-carboxamide (10-formyl THF route): step 1/1. It participates in purine metabolism; IMP biosynthesis via de novo pathway; IMP from 5-formamido-1-(5-phospho-D-ribosyl)imidazole-4-carboxamide: step 1/1. This is Bifunctional purine biosynthesis protein PurH from Lactococcus lactis subsp. cremoris (strain MG1363).